Consider the following 418-residue polypeptide: Homeobox protein H2.0 (418 aa).

Over residues 190 to 216 (QHQKQQHQQHHHHQHHPKHLHQQHKPP) the composition is skewed to basic residues. Disordered regions lie at residues 190 to 223 (QHQK…STTA), 259 to 296 (TSPA…RKRS), and 354 to 418 (RENL…NVVE). Positions 259–273 (TSPAAAAAATSQNGA) are enriched in low complexity. The segment at residues 295 to 354 (RSWSRAVFSNLQRKGLEIQFQQQKYITKPDRRKLAARLNLTDAQVKVWFQNRRMKWRHTR) is a DNA-binding region (homeobox). Residues 391-403 (DYSSDSCSSVDLS) are compositionally biased toward low complexity.

Belongs to the H2.0 homeobox family. As to expression, expressed in cells of the visceral musculature and its anlagen.

It localises to the nucleus. Its function is as follows. May play a role in pattern formation during embryonic and imaginal development. Is not essential for visceral muscle morphogenesis. The sequence is that of Homeobox protein H2.0 (H2.0) from Drosophila melanogaster (Fruit fly).